The sequence spans 96 residues: Co-chaperonin GroES (96 aa).

It belongs to the GroES chaperonin family. As to quaternary structure, heptamer of 7 subunits arranged in a ring. Interacts with the chaperonin GroEL.

It is found in the cytoplasm. Its function is as follows. Together with the chaperonin GroEL, plays an essential role in assisting protein folding. The GroEL-GroES system forms a nano-cage that allows encapsulation of the non-native substrate proteins and provides a physical environment optimized to promote and accelerate protein folding. GroES binds to the apical surface of the GroEL ring, thereby capping the opening of the GroEL channel. The protein is Co-chaperonin GroES of Hydrogenovibrio crunogenus (strain DSM 25203 / XCL-2) (Thiomicrospira crunogena).